A 183-amino-acid polypeptide reads, in one-letter code: MARIGYARTFTTDQNLAAQIAALRNAGCEVIREEQKSGASLEGRPQLMTILDFIHAGETFVITRIDRLARSLRDLQVIVDRLKAKGAHLVATEQPADTSTAAGKAFFDMLGVFAGFETNLRRERQAEGIAAARKRGIYKGRPPKIDRAEILLRLQQGQGPSKIARDLGISRGTVYQVRKGVFE.

In terms of domain architecture, Resolvase/invertase-type recombinase catalytic spans 2–136; sequence ARIGYARTFT…EGIAAARKRG (135 aa).

The protein belongs to the site-specific recombinase resolvase family.

This is Integrase-like protein y4lS from Sinorhizobium fredii (strain NBRC 101917 / NGR234).